The sequence spans 350 residues: UDP-glucose 4-epimerase GEPI48 (350 aa).

An NAD(+)-binding site is contributed by 5–36 (TVLVTGGAGYIGSHTVLQLLLGGFKAVVVDNL). S130 lines the substrate pocket. Y154 functions as the Proton acceptor in the catalytic mechanism.

It belongs to the NAD(P)-dependent epimerase/dehydratase family. Requires NAD(+) as cofactor.

It catalyses the reaction UDP-alpha-D-glucose = UDP-alpha-D-galactose. The protein operates within carbohydrate metabolism; galactose metabolism. In Cyamopsis tetragonoloba (Guar), this protein is UDP-glucose 4-epimerase GEPI48.